Here is a 204-residue protein sequence, read N- to C-terminus: Redox-sensing transcriptional repressor Rex 2 (204 aa).

The segment at residues 17 to 53 is a DNA-binding region (H-T-H motif); sequence MYRKVLEATKKPYISSDEIARFLEINPDLVRKDFSYL.

Belongs to the transcriptional regulatory Rex family. Homodimer.

The protein localises to the cytoplasm. Its function is as follows. Modulates transcription in response to changes in cellular NADH/NAD(+) redox state. This is Redox-sensing transcriptional repressor Rex 2 (rex2) from Thermotoga maritima (strain ATCC 43589 / DSM 3109 / JCM 10099 / NBRC 100826 / MSB8).